The sequence spans 335 residues: MKIVVTGAAGFIGSNLVKGLNARGIDDIIAVDDLTQGDKFRNLADLRIADYMDAGDFYDRFAEGAFGHVEAVFHEGACSDTMEPDGKYMMANNYTLSCNLFRACQNQNTRLLYASSAATYGGSDTFSESPEFEKPLNVYGYSKLLFDQHMRRELGMRFENAQTQVAGFRYFNVYGPREQHKGRMASVAFHQFNQFQADGKVKLFGDYGGYGPGGQMRDFVFIDDVVAVNLWFFDHPEKSGIFNLGTGRAQPFNDVAIAVVNTLRQSQNAAPLSLEDAVRGGMIDYVGFPEALVGKYQSYTQADLGALRAAGCQHVFADVQSGVTAYMQWLSNAKN.

NADP(+) contacts are provided by residues 11-12 (FI), 32-33 (DD), Lys-39, 75-79 (EGACS), and Asn-92. Catalysis depends on Tyr-139, which acts as the Proton acceptor. Lys-143 contributes to the NADP(+) binding site. Asn-172 is a binding site for substrate. Val-173 and Lys-181 together coordinate NADP(+). Catalysis depends on Lys-181, which acts as the Proton acceptor. Substrate-binding positions include Arg-183, His-190, 204–207 (FGDY), Arg-217, and Tyr-296.

The protein belongs to the NAD(P)-dependent epimerase/dehydratase family. HldD subfamily. As to quaternary structure, homopentamer. The cofactor is NADP(+).

The catalysed reaction is ADP-D-glycero-beta-D-manno-heptose = ADP-L-glycero-beta-D-manno-heptose. It functions in the pathway nucleotide-sugar biosynthesis; ADP-L-glycero-beta-D-manno-heptose biosynthesis; ADP-L-glycero-beta-D-manno-heptose from D-glycero-beta-D-manno-heptose 7-phosphate: step 4/4. Functionally, catalyzes the interconversion between ADP-D-glycero-beta-D-manno-heptose and ADP-L-glycero-beta-D-manno-heptose via an epimerization at carbon 6 of the heptose. The chain is ADP-L-glycero-D-manno-heptose-6-epimerase from Polaromonas naphthalenivorans (strain CJ2).